Consider the following 505-residue polypeptide: Prenylcysteine oxidase 1 (505 aa).

Positions M1–G27 are cleaved as a signal peptide. N196, N323, and N353 each carry an N-linked (GlcNAc...) asparagine glycan.

Belongs to the prenylcysteine oxidase family. FAD is required as a cofactor.

Its subcellular location is the lysosome. The enzyme catalyses an S-polyprenyl-L-cysteine + O2 + H2O = a polyprenal + L-cysteine + H2O2. It catalyses the reaction S-(2E,6E)-farnesyl-L-cysteine + O2 + H2O = (2E,6E)-farnesal + L-cysteine + H2O2. It carries out the reaction [(2E,6E,10E)-geranylgeranyl]-L-cysteine + O2 + H2O = (2E,6E,10E)-geranylgeranial + L-cysteine + H2O2. Its function is as follows. Prenylcysteine oxidase that cleaves the thioether bond of prenyl-L-cysteines, such as farnesylcysteine and geranylgeranylcysteine. Only active against free prenylcysteines and not prenylcysteine residues within prenylated proteins or peptides. Involved in the final step in the degradation of prenylated proteins, by degrading prenylcysteines after the protein has been degraded. In Pongo abelii (Sumatran orangutan), this protein is Prenylcysteine oxidase 1.